Reading from the N-terminus, the 937-residue chain is uncharacterized protein (937 aa).

N-acetylthreonine is present on Thr2. The tract at residues 281-937 is disordered; it reads NESPSSNINT…KKGKGKGGRK (657 aa). Residues 290–308 are compositionally biased toward low complexity; that stretch reads TTTTSTTTTTTTTTSSPVV. Thr292 functions as the Charge relay system in the catalytic mechanism. Composition is skewed to basic and acidic residues over residues 309–402, 411–431, 469–489, 512–532, 600–615, 667–687, 738–758, and 780–872; these read EESK…EKQQ, AEKE…RLEA, AEKE…KLEA, and AEKE…KVEE. Residues 345-802 adopt a coiled-coil conformation; the sequence is VDDSKEKEEK…KAAEETKVEE (458 aa). Acidic residues predominate over residues 887–897; sequence EETEEGEEVDE. Residues 898 to 924 show a composition bias toward low complexity; it reads ASNTTTEQTTTNANQPKKPNNNNNNNK. Positions 925 to 937 are enriched in basic residues; sequence GKGKKGKGKGGRK.

The protein belongs to the AB hydrolase superfamily.

This is an uncharacterized protein from Dictyostelium discoideum (Social amoeba).